The sequence spans 90 residues: Progonadoliberin-3 (90 aa).

The signal sequence occupies residues 1–23; it reads MEANSRVMVRVLLLALVVQVTLS. Gln24 is modified (pyrrolidone carboxylic acid). Gly33 carries the post-translational modification Glycine amide. The interval 56–90 is disordered; it reads LPEEASAQTQERLRPYNVINDDSSHFDRKKRSPNK.

This sequence belongs to the GnRH family.

It is found in the secreted. In terms of biological role, stimulates the secretion of gonadotropins. The sequence is that of Progonadoliberin-3 (gnrh3) from Dicentrarchus labrax (European seabass).